A 454-amino-acid chain; its full sequence is Aspartokinase 3 (454 aa).

2 ACT domains span residues 312–388 (ISKY…ALIM) and 389–454 (VVGE…VLIS).

It belongs to the aspartokinase family. Monomer.

The enzyme catalyses L-aspartate + ATP = 4-phospho-L-aspartate + ADP. It functions in the pathway amino-acid biosynthesis; L-lysine biosynthesis via DAP pathway; (S)-tetrahydrodipicolinate from L-aspartate: step 1/4. Its pathway is amino-acid biosynthesis; L-methionine biosynthesis via de novo pathway; L-homoserine from L-aspartate: step 1/3. It participates in amino-acid biosynthesis; L-threonine biosynthesis; L-threonine from L-aspartate: step 1/5. Functionally, catalyzes the phosphorylation of the beta-carboxyl group of aspartic acid with ATP to yield 4-phospho-L-aspartate, which is involved in the branched biosynthetic pathway leading to the biosynthesis of amino acids threonine, isoleucine and methionine. The polypeptide is Aspartokinase 3 (yclM) (Bacillus subtilis (strain 168)).